The sequence spans 249 residues: E3 ubiquitin-protein ligase RMA1 (249 aa).

The segment at C48–K97 adopts an RING-type zinc-finger fold. A helical; Anchor for type IV membrane protein transmembrane segment spans residues L231–L248.

In terms of tissue distribution, ubiquitous. Highly expressed in roots.

The protein localises to the endoplasmic reticulum membrane. It catalyses the reaction S-ubiquitinyl-[E2 ubiquitin-conjugating enzyme]-L-cysteine + [acceptor protein]-L-lysine = [E2 ubiquitin-conjugating enzyme]-L-cysteine + N(6)-ubiquitinyl-[acceptor protein]-L-lysine.. It participates in protein modification; protein ubiquitination. In terms of biological role, E3 ubiquitin-protein ligase that promotes the ubiquitination and proteasomal degradation of aquaporin PIP2-1. Forms a ubiquitin ligase complex in cooperation with the E2 enzymes UCB8/UCB10. This chain is E3 ubiquitin-protein ligase RMA1 (RMA1), found in Arabidopsis thaliana (Mouse-ear cress).